The following is a 175-amino-acid chain: DELTA-stichotoxin-Hcr4a (175 aa).

Residues 1–10 form a plays an important role in the hemolytic activity region; it reads ALAGAIIAGA. The N-terminal region stretch occupies residues 9–28; the sequence is GASLTFQILDKVLAELGQVS. Residues Ser-52, Val-85, Ser-103, Pro-105, Tyr-131, Tyr-135, and Tyr-136 each contribute to the phosphocholine site. The segment at 103–118 is trp-rich region, which is important for the binding to lipid membrane; that stretch reads SVPFDYNLYSNWWDVK.

It belongs to the actinoporin family. Sea anemone subfamily. As to quaternary structure, octamer or nonamer in membranes. Monomer in the soluble state.

It localises to the secreted. The protein resides in the nematocyst. It is found in the target cell membrane. Functionally, pore-forming protein that forms cations-selective hydrophilic pores of around 1 nm and causes cardiac stimulation and cytolysis. Pore formation is a multi-step process that involves specific recognition of membrane sphingomyelin (but neither cholesterol nor phosphatidylcholine) using aromatic rich region and adjacent phosphocholine (POC) binding site, firm binding to the membrane (mainly driven by hydrophobic interactions) accompanied by the transfer of the N-terminal region to the lipid-water interface and finally pore formation after oligomerization of monomers. In Radianthus crispa (Leathery sea anemone), this protein is DELTA-stichotoxin-Hcr4a.